A 244-amino-acid polypeptide reads, in one-letter code: Large ribosomal subunit protein uL30B (244 aa).

Residues 1–11 show a composition bias toward polar residues; the sequence is MSTEKILTPES. Residues 1–21 form a disordered region; that stretch reads MSTEKILTPESQLKKTKAQQK.

It belongs to the universal ribosomal protein uL30 family. Component of the large ribosomal subunit (LSU). Mature yeast ribosomes consist of a small (40S) and a large (60S) subunit. The 40S small subunit contains 1 molecule of ribosomal RNA (18S rRNA) and 33 different proteins (encoded by 57 genes). The large 60S subunit contains 3 rRNA molecules (25S, 5.8S and 5S rRNA) and 46 different proteins (encoded by 81 genes).

The protein resides in the cytoplasm. Component of the ribosome, a large ribonucleoprotein complex responsible for the synthesis of proteins in the cell. The small ribosomal subunit (SSU) binds messenger RNAs (mRNAs) and translates the encoded message by selecting cognate aminoacyl-transfer RNA (tRNA) molecules. The large subunit (LSU) contains the ribosomal catalytic site termed the peptidyl transferase center (PTC), which catalyzes the formation of peptide bonds, thereby polymerizing the amino acids delivered by tRNAs into a polypeptide chain. The nascent polypeptides leave the ribosome through a tunnel in the LSU and interact with protein factors that function in enzymatic processing, targeting, and the membrane insertion of nascent chains at the exit of the ribosomal tunnel. This Saccharomyces cerevisiae (strain ATCC 204508 / S288c) (Baker's yeast) protein is Large ribosomal subunit protein uL30B.